The sequence spans 336 residues: Peroxidase 20 (336 aa).

A signal peptide spans 1–24 (MEIKQKKVWLSLIVLYAITTSVLG). 4 cysteine pairs are disulfide-bonded: cysteine 39/cysteine 119, cysteine 72/cysteine 77, cysteine 125/cysteine 331, and cysteine 204/cysteine 239. The Proton acceptor role is filled by histidine 70. Positions 71, 74, 76, 78, and 80 each coordinate Ca(2+). Residue proline 167 participates in substrate binding. Residue asparagine 170 is glycosylated (N-linked (GlcNAc...) asparagine). Histidine 197 contacts heme b. Position 198 (threonine 198) interacts with Ca(2+). Ca(2+) is bound by residues aspartate 252, threonine 255, and aspartate 260.

The protein belongs to the peroxidase family. Classical plant (class III) peroxidase subfamily. Heme b serves as cofactor. Ca(2+) is required as a cofactor.

It is found in the secreted. It carries out the reaction 2 a phenolic donor + H2O2 = 2 a phenolic radical donor + 2 H2O. In terms of biological role, removal of H(2)O(2), oxidation of toxic reductants, biosynthesis and degradation of lignin, suberization, auxin catabolism, response to environmental stresses such as wounding, pathogen attack and oxidative stress. These functions might be dependent on each isozyme/isoform in each plant tissue. Functionally, may be implicated in the systemic acquired resistance response via the salicylic acid signal transduction pathway. This chain is Peroxidase 20 (PER20), found in Arabidopsis thaliana (Mouse-ear cress).